The primary structure comprises 419 residues: Serine hydroxymethyltransferase (419 aa).

(6S)-5,6,7,8-tetrahydrofolate-binding positions include leucine 121 and 125–127; that span reads GHL. N6-(pyridoxal phosphate)lysine is present on lysine 230. 355–357 contacts (6S)-5,6,7,8-tetrahydrofolate; sequence SPF.

This sequence belongs to the SHMT family. Homodimer. The cofactor is pyridoxal 5'-phosphate.

It localises to the cytoplasm. It catalyses the reaction (6R)-5,10-methylene-5,6,7,8-tetrahydrofolate + glycine + H2O = (6S)-5,6,7,8-tetrahydrofolate + L-serine. Its pathway is one-carbon metabolism; tetrahydrofolate interconversion. It participates in amino-acid biosynthesis; glycine biosynthesis; glycine from L-serine: step 1/1. In terms of biological role, catalyzes the reversible interconversion of serine and glycine with tetrahydrofolate (THF) serving as the one-carbon carrier. This reaction serves as the major source of one-carbon groups required for the biosynthesis of purines, thymidylate, methionine, and other important biomolecules. Also exhibits THF-independent aldolase activity toward beta-hydroxyamino acids, producing glycine and aldehydes, via a retro-aldol mechanism. The chain is Serine hydroxymethyltransferase from Streptococcus uberis (strain ATCC BAA-854 / 0140J).